We begin with the raw amino-acid sequence, 248 residues long: 2-C-methyl-D-erythritol 4-phosphate cytidylyltransferase (248 aa).

It belongs to the IspD/TarI cytidylyltransferase family. IspD subfamily.

It carries out the reaction 2-C-methyl-D-erythritol 4-phosphate + CTP + H(+) = 4-CDP-2-C-methyl-D-erythritol + diphosphate. The protein operates within isoprenoid biosynthesis; isopentenyl diphosphate biosynthesis via DXP pathway; isopentenyl diphosphate from 1-deoxy-D-xylulose 5-phosphate: step 2/6. In terms of biological role, catalyzes the formation of 4-diphosphocytidyl-2-C-methyl-D-erythritol from CTP and 2-C-methyl-D-erythritol 4-phosphate (MEP). The polypeptide is 2-C-methyl-D-erythritol 4-phosphate cytidylyltransferase (Corynebacterium efficiens (strain DSM 44549 / YS-314 / AJ 12310 / JCM 11189 / NBRC 100395)).